A 502-amino-acid polypeptide reads, in one-letter code: ATP synthase subunit beta (502 aa).

156 to 163 (GGAGVGKT) lines the ATP pocket.

The protein belongs to the ATPase alpha/beta chains family. F-type ATPases have 2 components, CF(1) - the catalytic core - and CF(0) - the membrane proton channel. CF(1) has five subunits: alpha(3), beta(3), gamma(1), delta(1), epsilon(1). CF(0) has three main subunits: a(1), b(2) and c(9-12). The alpha and beta chains form an alternating ring which encloses part of the gamma chain. CF(1) is attached to CF(0) by a central stalk formed by the gamma and epsilon chains, while a peripheral stalk is formed by the delta and b chains.

Its subcellular location is the cell membrane. The catalysed reaction is ATP + H2O + 4 H(+)(in) = ADP + phosphate + 5 H(+)(out). In terms of biological role, produces ATP from ADP in the presence of a proton gradient across the membrane. The catalytic sites are hosted primarily by the beta subunits. This chain is ATP synthase subunit beta, found in Cellulophaga lytica (Cytophaga lytica).